Consider the following 388-residue polypeptide: Probable protein phosphatase 2C 43 (388 aa).

The PPM-type phosphatase domain maps to 53–352 (EFSFAVVQAN…DDITVVVVFI (300 aa)). Residues Asp84, Gly85, Asp284, and Asp343 each coordinate Mn(2+).

This sequence belongs to the PP2C family. Mg(2+) serves as cofactor. Mn(2+) is required as a cofactor.

It catalyses the reaction O-phospho-L-seryl-[protein] + H2O = L-seryl-[protein] + phosphate. It carries out the reaction O-phospho-L-threonyl-[protein] + H2O = L-threonyl-[protein] + phosphate. This is Probable protein phosphatase 2C 43 from Oryza sativa subsp. japonica (Rice).